Consider the following 372-residue polypeptide: sn-glycerol-3-phosphate import ATP-binding protein UgpC (372 aa).

Positions L2–I233 constitute an ABC transporter domain. G35–S42 is an ATP binding site.

It belongs to the ABC transporter superfamily. sn-glycerol-3-phosphate importer (TC 3.A.1.1.3) family. The complex is composed of two ATP-binding proteins (UgpC), two transmembrane proteins (UgpA and UgpE) and a solute-binding protein (UgpB).

It localises to the cell inner membrane. The enzyme catalyses sn-glycerol 3-phosphate(out) + ATP + H2O = sn-glycerol 3-phosphate(in) + ADP + phosphate + H(+). Functionally, part of the ABC transporter complex UgpBAEC involved in sn-glycerol-3-phosphate (G3P) import. Responsible for energy coupling to the transport system. In Vibrio vulnificus (strain YJ016), this protein is sn-glycerol-3-phosphate import ATP-binding protein UgpC.